The following is a 697-amino-acid chain: Protein Niban 3 (697 aa).

The tract at residues 1–48 (MGPDRKEVPLSRGTQAVVVGKGRGAPGDDSSMGGRPSSPLDKQQRQHL) is disordered.

This sequence belongs to the Niban family. As to expression, specifically expressed in B-lymphocytes.

The protein is Protein Niban 3 of Homo sapiens (Human).